A 225-amino-acid chain; its full sequence is MKGLVIFFCLFYGCHVAGATGKTIMLFPQKTDTDYVTLKPTERVLNQITVCLKSYTELIKEHSLFSLAMQGSGKDNTLLIYPYPPNNISISIHNEDIYFKVDPEVLQWKRTCVTWDSKTGLLQLWINGKLYPRRITKSRSPIGPQISVILGQEQDSYGGSFDINQAFVGEMSDVNVWDYVLPPENIKAYFSDDYTLDGNFYSWDGGNYTINGLIVVLRNQFIPKL.

The first 19 residues, 1–19 (MKGLVIFFCLFYGCHVAGA), serve as a signal peptide directing secretion. The Pentraxin (PTX) domain maps to 21–223 (GKTIMLFPQK…IVVLRNQFIP (203 aa)). Cysteine 51 and cysteine 112 are joined by a disulfide. Aspartate 75 and asparagine 76 together coordinate Ca(2+). The N-linked (GlcNAc...) asparagine glycan is linked to asparagine 87. Glutamate 153, glutamine 154, aspartate 155, and glutamine 165 together coordinate Ca(2+). Asparagine 207 is a glycosylation site (N-linked (GlcNAc...) asparagine).

As to quaternary structure, homodecamer consisting of two homopentamer units. Pentraxin (or pentaxin) have a discoid arrangement of 5 non-covalently bound subunits. The cofactor is Ca(2+). In terms of processing, glycosylated. In terms of tissue distribution, oviduct. Highest expression levels were detected in the pars convoluta with lower levels detected in the pars recta. No expression was detected in the pars uterina.

The protein localises to the secreted. Functionally, calcium-dependent beta-galactose specific lectin. In Lepidobatrachus laevis (Budgett's frog), this protein is Jeltraxin.